The primary structure comprises 133 residues: Large ribosomal subunit protein eL14 (133 aa).

This sequence belongs to the eukaryotic ribosomal protein eL14 family.

This is Large ribosomal subunit protein eL14 (RPL14) from Griffithsia japonica (Red alga).